A 953-amino-acid chain; its full sequence is MVLSRLLRAGEGKLLKRLRRIAAHINELEDDVLALSDAELRAKTDEFKRRHTDGESLDELLPEAFAVAREGARRTLGQRHFDVQLMGGAALHLGQIAEMKTGEGKTLTCVLPAYLNAIAGRGVHVVTVNDYLAKRDADWMGRVHRFLGLEVGAIMADMTPEQRRHAYAADITYGTNNEFGFDYLRDNMAWSLADCVQRGHFFSIVDEVDSILIDEARTPLIISGPADQSSRWYQEFARLAPMLKKDQHYEVDERKRTVGVTEDGVTIIEDQLGIENLYEAANTPLVGYLNNALKAKELYKRDKDYIVRNGEVVIVDEFTGRILHGRRYNEGMHQAIEAKEGVEIKAENQTLATITLQNYFRLYEKLAGMTGTAETEAAEFNGTYKLGVVPIPTNRPMARADQPDLVYKSEVAKFEAVAEDIEEKHRKGQPVLVGTTSVERSEYLAKLLVKKGVPHNVLNAKYHQSEAAIIAEAGRKGAVTVATNMAGRGTDIVLGGNVDHLADAELRKRGLDPVDNREEYEAQWPAVVEKIKEQVEAEAEEVRELGGLYVLGTERHESRRIDNQLRGRSGRQGDPGESRFYLSLGDELMRRFNAAMVETVMTRLKVPDDVPIEHKMVTRAIRSAQTQVEQQNMEIRKNVLKYDEVMNQQRSVIYDERRRVLEGEDLQEQVRHMIRDVVTEYVNAATADGYAEDWDFEKLWSALKTLYPVSVSWEALVDSDEDLSKERLLEEVLADAEAAYAKREAEVDGKVGPGAMRELERRVVLSVLDRKWREHLYEMDYLKEGIGLRAMAQRDPLVEYRREGFDMFHAMLDALKEESVGFLFNVQVEAAEPEPAPEQPSVPVSVSRSAEPTPDLQAAAEAAAAQSQVRRAKPTSAGPALSQLPGSTTQAPSALRGKGLDAPEKQRLNYSGPTEQGGVQTTSESAGEQGNGTSTRRERRAAARAEAKKNKRR.

ATP-binding positions include glutamine 84, 102–106 (GEGKT), and aspartate 491. Residues 832 to 953 (EPEPAPEQPS…RAEAKKNKRR (122 aa)) form a disordered region. Residues 841 to 865 (SVPVSVSRSAEPTPDLQAAAEAAAA) are compositionally biased toward low complexity. Basic and acidic residues predominate over residues 898–907 (KGLDAPEKQR). Residues 908–934 (LNYSGPTEQGGVQTTSESAGEQGNGTS) show a composition bias toward polar residues. Residues 940–953 (RAAARAEAKKNKRR) are compositionally biased toward basic and acidic residues.

Belongs to the SecA family. Monomer and homodimer. Part of the essential Sec protein translocation apparatus which comprises SecA, SecYEG and auxiliary proteins SecDF. Other proteins may also be involved.

Its subcellular location is the cell membrane. It is found in the cytoplasm. It catalyses the reaction ATP + H2O + cellular proteinSide 1 = ADP + phosphate + cellular proteinSide 2.. Part of the Sec protein translocase complex. Interacts with the SecYEG preprotein conducting channel. Has a central role in coupling the hydrolysis of ATP to the transfer of proteins into and across the cell membrane, serving as an ATP-driven molecular motor driving the stepwise translocation of polypeptide chains across the membrane. This is Protein translocase subunit SecA from Saccharopolyspora erythraea (strain ATCC 11635 / DSM 40517 / JCM 4748 / NBRC 13426 / NCIMB 8594 / NRRL 2338).